A 304-amino-acid polypeptide reads, in one-letter code: Homoserine O-succinyltransferase (304 aa).

The Acyl-thioester intermediate role is filled by cysteine 142. Substrate-binding residues include lysine 163 and serine 192. Histidine 235 (proton acceptor) is an active-site residue. Glutamate 237 is an active-site residue. Arginine 249 serves as a coordination point for substrate.

It belongs to the MetA family.

The protein resides in the cytoplasm. The enzyme catalyses L-homoserine + succinyl-CoA = O-succinyl-L-homoserine + CoA. It functions in the pathway amino-acid biosynthesis; L-methionine biosynthesis via de novo pathway; O-succinyl-L-homoserine from L-homoserine: step 1/1. In terms of biological role, transfers a succinyl group from succinyl-CoA to L-homoserine, forming succinyl-L-homoserine. The protein is Homoserine O-succinyltransferase of Blochmanniella pennsylvanica (strain BPEN).